The primary structure comprises 317 residues: 3'-5' exoribonuclease YhaM (317 aa).

Positions 17-90 form a DNA-binding region, OB; that stretch reads FLLIKESTRG…QLKILSIRLS (74 aa). One can recognise an HD domain in the interval 163–279; that stretch reads HVVSMLAIGK…LHLIDLIDAK (117 aa).

It belongs to the YhaM family.

Shows a 3'-5' exoribonuclease activity. This Oceanobacillus iheyensis (strain DSM 14371 / CIP 107618 / JCM 11309 / KCTC 3954 / HTE831) protein is 3'-5' exoribonuclease YhaM.